A 105-amino-acid polypeptide reads, in one-letter code: Insulin (105 aa).

The first 24 residues, M1 to A24, serve as a signal peptide directing secretion. 3 cysteine pairs are disulfide-bonded: C31–C91, C43–C104, and C90–C95. Positions E57 to Q82 are cleaved as a propeptide — c peptide.

This sequence belongs to the insulin family. Heterodimer of a B chain and an A chain linked by two disulfide bonds.

Its subcellular location is the secreted. Its function is as follows. Insulin decreases blood glucose concentration. It increases cell permeability to monosaccharides, amino acids and fatty acids. It accelerates glycolysis, the pentose phosphate cycle, and glycogen synthesis in liver. This Ovis aries (Sheep) protein is Insulin (INS).